Here is a 511-residue protein sequence, read N- to C-terminus: Maturase K (511 aa).

It belongs to the intron maturase 2 family. MatK subfamily.

The protein resides in the plastid. Its subcellular location is the chloroplast. Functionally, usually encoded in the trnK tRNA gene intron. Probably assists in splicing its own and other chloroplast group II introns. The polypeptide is Maturase K (Campsis radicans (Trumpet creeper)).